A 148-amino-acid polypeptide reads, in one-letter code: SsrA-binding protein (148 aa).

This sequence belongs to the SmpB family.

It localises to the cytoplasm. Its function is as follows. Required for rescue of stalled ribosomes mediated by trans-translation. Binds to transfer-messenger RNA (tmRNA), required for stable association of tmRNA with ribosomes. tmRNA and SmpB together mimic tRNA shape, replacing the anticodon stem-loop with SmpB. tmRNA is encoded by the ssrA gene; the 2 termini fold to resemble tRNA(Ala) and it encodes a 'tag peptide', a short internal open reading frame. During trans-translation Ala-aminoacylated tmRNA acts like a tRNA, entering the A-site of stalled ribosomes, displacing the stalled mRNA. The ribosome then switches to translate the ORF on the tmRNA; the nascent peptide is terminated with the 'tag peptide' encoded by the tmRNA and targeted for degradation. The ribosome is freed to recommence translation, which seems to be the essential function of trans-translation. The chain is SsrA-binding protein from Azoarcus sp. (strain BH72).